The primary structure comprises 545 residues: Glucose-6-phosphate isomerase (545 aa).

Glutamate 351 (proton donor) is an active-site residue. Residues histidine 382 and lysine 510 contribute to the active site.

It belongs to the GPI family.

Its subcellular location is the cytoplasm. The enzyme catalyses alpha-D-glucose 6-phosphate = beta-D-fructose 6-phosphate. It functions in the pathway carbohydrate biosynthesis; gluconeogenesis. The protein operates within carbohydrate degradation; glycolysis; D-glyceraldehyde 3-phosphate and glycerone phosphate from D-glucose: step 2/4. Its function is as follows. Catalyzes the reversible isomerization of glucose-6-phosphate to fructose-6-phosphate. The protein is Glucose-6-phosphate isomerase of Helicobacter pylori (strain ATCC 700392 / 26695) (Campylobacter pylori).